The chain runs to 90 residues: Exodeoxyribonuclease 7 small subunit (90 aa).

The segment at 62 to 90 (QDGQANPMSSQGHTAGEYPDDEAEEAEEA) is disordered. A compositionally biased stretch (polar residues) spans 64–74 (GQANPMSSQGH). The segment covering 79–90 (YPDDEAEEAEEA) has biased composition (acidic residues).

Belongs to the XseB family. Heterooligomer composed of large and small subunits.

It is found in the cytoplasm. It carries out the reaction Exonucleolytic cleavage in either 5'- to 3'- or 3'- to 5'-direction to yield nucleoside 5'-phosphates.. Bidirectionally degrades single-stranded DNA into large acid-insoluble oligonucleotides, which are then degraded further into small acid-soluble oligonucleotides. The chain is Exodeoxyribonuclease 7 small subunit from Desulfovibrio desulfuricans (strain ATCC 27774 / DSM 6949 / MB).